The chain runs to 285 residues: NAC domain-containing protein 92 (285 aa).

The NAC domain occupies 20 to 170 (LPPGFRFHPT…EWVICRVFQK (151 aa)). Residues 117–176 (VGMKKTLVFYKGRAPKGVKTNWVMHEYRLEGKYCIENLPQTAKNEWVICRVFQKRADGTK) mediate DNA binding.

Forms homodimers. Interacts with GLK1 and GLK2. Interacts with NLA. Post-translationally, ubiquitinated by NLA. Ubiquitination of NAC92 leads to its degradation by the proteasome during leaf senescence under nitrogen deficiency. In terms of tissue distribution, mostly expressed in roots and flowers, and, to a lower extent, in shoots and leaves. Particularly expressed in old and senescing tissues.

The protein resides in the nucleus. Transcription activator that binds to DNA in promoters of target genes on a specific bipartite motif 5'-[ACG][CA]GT[AG](5-6n)[CT]AC[AG]-3'. Promotes lateral root development. Triggers the expression of senescence-associated genes during age-, salt- and dark-induced senescence through a regulatory network that may involve cross-talk with salt- and H(2)O(2)-dependent signaling pathways. Also regulates genes during seed germination. Positively regulates aging-induced cell death. Involved in age-related resistance (ARR) against Pseudomonas syringae pv. tomato and Hyaloperonospora arabidopsidis. Antagonizes GLK1 and GLK2 transcriptional activity, shifting the balance from chloroplast maintenance towards deterioration during leaf senescence. Promotes the expression of senescence-associated genes, including ENDO1/BFN1, SWEET15/SAG29 and SINA1/At3g13672, during senescence onset. This Arabidopsis thaliana (Mouse-ear cress) protein is NAC domain-containing protein 92.